Here is a 229-residue protein sequence, read N- to C-terminus: RNA chaperone ProQ (229 aa).

Residues 105-178 (EAKARVQAQR…PREEKHTPVS (74 aa)) are disordered. Positions 117–136 (QQAKKREAAAAAGDKESAPR) are enriched in basic and acidic residues. Basic residues predominate over residues 137–146 (RERKPRPAAP). Basic and acidic residues predominate over residues 147-176 (RRKEGAERKPRAEKPAAKAPRAPREEKHTP).

This sequence belongs to the ProQ family.

The protein localises to the cytoplasm. Functionally, RNA chaperone with significant RNA binding, RNA strand exchange and RNA duplexing activities. May regulate ProP activity through an RNA-based, post-transcriptional mechanism. In Escherichia fergusonii (strain ATCC 35469 / DSM 13698 / CCUG 18766 / IAM 14443 / JCM 21226 / LMG 7866 / NBRC 102419 / NCTC 12128 / CDC 0568-73), this protein is RNA chaperone ProQ.